The following is a 264-amino-acid chain: MSDLLSALLLGILEGLTEFLPISSTGHLLIAQHWLGARSDFFNIVIQAGAIVAVVLVFRQRLLQLATGFNQRGNREYVFKLGAAFLVTAVVGLVVRKAGWSLPETVSPVAWALIIGGVWMLLVEAYTARLPDRDQVTWTVAIGVGLAQVVAGVFPGTSRSASAIFLAMLLGLSRRAAAAEFVFLVGIPTMFAASAYTFLEMAKAGQLGSEDWADVGVAFLAAAITGFVVVKWLMGYIKSHRFTAFAIYRIALGAALLLWLPSGS.

7 helical membrane passes run 38–58 (RSDFFNIVIQAGAIVAVVLVF), 75–95 (REYVFKLGAAFLVTAVVGLVV), 106–126 (VSPVAWALIIGGVWMLLVEAY), 136–156 (VTWTVAIGVGLAQVVAGVFPG), 181–201 (FVFLVGIPTMFAASAYTFLEM), 217–237 (VAFLAAAITGFVVVKWLMGYI), and 242–262 (FTAFAIYRIALGAALLLWLPS).

The protein belongs to the UppP family.

The protein resides in the cell membrane. It catalyses the reaction di-trans,octa-cis-undecaprenyl diphosphate + H2O = di-trans,octa-cis-undecaprenyl phosphate + phosphate + H(+). Catalyzes the dephosphorylation of undecaprenyl diphosphate (UPP). Confers resistance to bacitracin. The protein is Undecaprenyl-diphosphatase of Stenotrophomonas maltophilia (strain K279a).